A 354-amino-acid polypeptide reads, in one-letter code: UDP-3-O-acylglucosamine N-acyltransferase (354 aa).

The active-site Proton acceptor is histidine 257.

It belongs to the transferase hexapeptide repeat family. LpxD subfamily. In terms of assembly, homotrimer.

It catalyses the reaction a UDP-3-O-[(3R)-3-hydroxyacyl]-alpha-D-glucosamine + a (3R)-hydroxyacyl-[ACP] = a UDP-2-N,3-O-bis[(3R)-3-hydroxyacyl]-alpha-D-glucosamine + holo-[ACP] + H(+). It functions in the pathway bacterial outer membrane biogenesis; LPS lipid A biosynthesis. Its function is as follows. Catalyzes the N-acylation of UDP-3-O-acylglucosamine using 3-hydroxyacyl-ACP as the acyl donor. Is involved in the biosynthesis of lipid A, a phosphorylated glycolipid that anchors the lipopolysaccharide to the outer membrane of the cell. The polypeptide is UDP-3-O-acylglucosamine N-acyltransferase (Rhizobium johnstonii (strain DSM 114642 / LMG 32736 / 3841) (Rhizobium leguminosarum bv. viciae)).